Reading from the N-terminus, the 159-residue chain is NADH-quinone oxidoreductase subunit B (159 aa).

The [4Fe-4S] cluster site is built by Cys-37, Cys-38, Cys-102, and Cys-132.

It belongs to the complex I 20 kDa subunit family. NDH-1 is composed of 14 different subunits. Subunits NuoB, C, D, E, F, and G constitute the peripheral sector of the complex. It depends on [4Fe-4S] cluster as a cofactor.

It localises to the cell inner membrane. The catalysed reaction is a quinone + NADH + 5 H(+)(in) = a quinol + NAD(+) + 4 H(+)(out). Functionally, NDH-1 shuttles electrons from NADH, via FMN and iron-sulfur (Fe-S) centers, to quinones in the respiratory chain. Couples the redox reaction to proton translocation (for every two electrons transferred, four hydrogen ions are translocated across the cytoplasmic membrane), and thus conserves the redox energy in a proton gradient. This chain is NADH-quinone oxidoreductase subunit B, found in Vesicomyosocius okutanii subsp. Calyptogena okutanii (strain HA).